Reading from the N-terminus, the 154-residue chain is SsrA-binding protein (154 aa).

It belongs to the SmpB family.

It localises to the cytoplasm. Functionally, required for rescue of stalled ribosomes mediated by trans-translation. Binds to transfer-messenger RNA (tmRNA), required for stable association of tmRNA with ribosomes. tmRNA and SmpB together mimic tRNA shape, replacing the anticodon stem-loop with SmpB. tmRNA is encoded by the ssrA gene; the 2 termini fold to resemble tRNA(Ala) and it encodes a 'tag peptide', a short internal open reading frame. During trans-translation Ala-aminoacylated tmRNA acts like a tRNA, entering the A-site of stalled ribosomes, displacing the stalled mRNA. The ribosome then switches to translate the ORF on the tmRNA; the nascent peptide is terminated with the 'tag peptide' encoded by the tmRNA and targeted for degradation. The ribosome is freed to recommence translation, which seems to be the essential function of trans-translation. In Lachnoclostridium phytofermentans (strain ATCC 700394 / DSM 18823 / ISDg) (Clostridium phytofermentans), this protein is SsrA-binding protein.